The sequence spans 94 residues: Co-chaperonin GroES (94 aa).

It belongs to the GroES chaperonin family. Heptamer of 7 subunits arranged in a ring. Interacts with the chaperonin GroEL.

The protein localises to the cytoplasm. In terms of biological role, together with the chaperonin GroEL, plays an essential role in assisting protein folding. The GroEL-GroES system forms a nano-cage that allows encapsulation of the non-native substrate proteins and provides a physical environment optimized to promote and accelerate protein folding. GroES binds to the apical surface of the GroEL ring, thereby capping the opening of the GroEL channel. The chain is Co-chaperonin GroES from Alkaliphilus metalliredigens (strain QYMF).